The sequence spans 247 residues: 5-oxoprolinase subunit A (247 aa).

This sequence belongs to the LamB/PxpA family. In terms of assembly, forms a complex composed of PxpA, PxpB and PxpC.

It catalyses the reaction 5-oxo-L-proline + ATP + 2 H2O = L-glutamate + ADP + phosphate + H(+). Functionally, catalyzes the cleavage of 5-oxoproline to form L-glutamate coupled to the hydrolysis of ATP to ADP and inorganic phosphate. This chain is 5-oxoprolinase subunit A, found in Ralstonia pickettii (strain 12J).